Consider the following 226-residue polypeptide: AN1-type zinc finger protein 3 homolog (226 aa).

The A20-type zinc-finger motif lies at 12–44; sequence PSLPPRCPCGFWGSSKTMNLCSKCFADFQKKQP. Residues Cys18, Cys20, Cys32, and Cys35 each contribute to the Zn(2+) site. The tract at residues 42-149 is disordered; sequence KQPDEDTAPS…DRPDNSSRSK (108 aa). 3 stretches are compositionally biased toward polar residues: residues 49–59, 67–92, and 105–114; these read APSTSSSQSDL, DNGN…NVDS, and AHVSLTTPSK. Residues 134–146 are compositionally biased toward basic and acidic residues; it reads RLLDSGDRPDNSS. Residues 150–199 form an AN1-type zinc finger; sequence QKSRRRCFRCQIKLELVQQELGSCRCGYVFCMLHRLPEQHDCTFDHMGRG. Zn(2+) contacts are provided by Cys156, Cys159, Cys173, Cys175, Cys180, His183, His189, and Cys191.

This Xenopus laevis (African clawed frog) protein is AN1-type zinc finger protein 3 homolog (zfand3).